The chain runs to 429 residues: Cytochrome P450 BJ-3 (429 aa).

Residue C376 participates in heme binding.

This sequence belongs to the cytochrome P450 family. Heme is required as a cofactor.

Functionally, cytochromes P450 are a group of heme-thiolate monooxygenases. They oxidize a variety of structurally unrelated compounds, including steroids, fatty acids, and xenobiotics. The sequence is that of Cytochrome P450 BJ-3 (cyp114) from Bradyrhizobium diazoefficiens (strain JCM 10833 / BCRC 13528 / IAM 13628 / NBRC 14792 / USDA 110).